The following is a 191-amino-acid chain: Phosphoheptose isomerase (191 aa).

The region spanning isoleucine 34–serine 191 is the SIS domain. Substrate is bound at residue asparagine 49 to glycine 51. Histidine 58 and glutamate 62 together coordinate Zn(2+). Substrate contacts are provided by residues glutamate 62, asparagine 91 to aspartate 92, threonine 117 to serine 119, serine 122, and glutamine 169. Positions 169 and 177 each coordinate Zn(2+).

It belongs to the SIS family. GmhA subfamily. The cofactor is Zn(2+).

The protein resides in the cytoplasm. The catalysed reaction is 2 D-sedoheptulose 7-phosphate = D-glycero-alpha-D-manno-heptose 7-phosphate + D-glycero-beta-D-manno-heptose 7-phosphate. It functions in the pathway carbohydrate biosynthesis; D-glycero-D-manno-heptose 7-phosphate biosynthesis; D-glycero-alpha-D-manno-heptose 7-phosphate and D-glycero-beta-D-manno-heptose 7-phosphate from sedoheptulose 7-phosphate: step 1/1. Catalyzes the isomerization of sedoheptulose 7-phosphate in D-glycero-D-manno-heptose 7-phosphate. The sequence is that of Phosphoheptose isomerase from Aquifex aeolicus (strain VF5).